Consider the following 167-residue polypeptide: Early nodulin-like protein 16 (167 aa).

A signal peptide spans 1-24 (MARVAVLVAGAVLAFLLAATNVTA). A Phytocyanin domain is found at 25 to 126 (KRWTVGDNKF…GMKLAVLVEK (102 aa)). Asn-40, Asn-71, Asn-86, and Asn-99 each carry an N-linked (GlcNAc...) asparagine glycan. A disulfide bond links Cys-78 and Cys-114. Residue Asn-138 is the site of GPI-anchor amidated asparagine attachment. Residues 139–167 (SARRTFSVSGFAYQFLIPVAVFAAVGTRY) constitute a propeptide, removed in mature form.

Belongs to the early nodulin-like (ENODL) family.

Its subcellular location is the cell membrane. Functionally, may act as a carbohydrate transporter. This is Early nodulin-like protein 16 from Arabidopsis thaliana (Mouse-ear cress).